The sequence spans 322 residues: Phosphatidylserine decarboxylase proenzyme (322 aa).

Active-site charge relay system; for autoendoproteolytic cleavage activity residues include D90, H147, and S254. Catalysis depends on S254, which acts as the Schiff-base intermediate with substrate; via pyruvic acid; for decarboxylase activity. A Pyruvic acid (Ser); by autocatalysis modification is found at S254. Residues 293 to 322 (PDAEPAPLPAEEIEAEHDASPLIDDKKDQV) form a disordered region. Positions 308-322 (EHDASPLIDDKKDQV) are enriched in basic and acidic residues.

This sequence belongs to the phosphatidylserine decarboxylase family. PSD-B subfamily. Prokaryotic type I sub-subfamily. In terms of assembly, heterodimer of a large membrane-associated beta subunit and a small pyruvoyl-containing alpha subunit. Pyruvate serves as cofactor. Post-translationally, is synthesized initially as an inactive proenzyme. Formation of the active enzyme involves a self-maturation process in which the active site pyruvoyl group is generated from an internal serine residue via an autocatalytic post-translational modification. Two non-identical subunits are generated from the proenzyme in this reaction, and the pyruvate is formed at the N-terminus of the alpha chain, which is derived from the carboxyl end of the proenzyme. The autoendoproteolytic cleavage occurs by a canonical serine protease mechanism, in which the side chain hydroxyl group of the serine supplies its oxygen atom to form the C-terminus of the beta chain, while the remainder of the serine residue undergoes an oxidative deamination to produce ammonia and the pyruvoyl prosthetic group on the alpha chain. During this reaction, the Ser that is part of the protease active site of the proenzyme becomes the pyruvoyl prosthetic group, which constitutes an essential element of the active site of the mature decarboxylase.

The protein localises to the cell membrane. The catalysed reaction is a 1,2-diacyl-sn-glycero-3-phospho-L-serine + H(+) = a 1,2-diacyl-sn-glycero-3-phosphoethanolamine + CO2. Its pathway is phospholipid metabolism; phosphatidylethanolamine biosynthesis; phosphatidylethanolamine from CDP-diacylglycerol: step 2/2. Catalyzes the formation of phosphatidylethanolamine (PtdEtn) from phosphatidylserine (PtdSer). In Escherichia coli O127:H6 (strain E2348/69 / EPEC), this protein is Phosphatidylserine decarboxylase proenzyme.